Consider the following 210-residue polypeptide: Large ribosomal subunit protein uL4 (210 aa).

Residues 44 to 54 are compositionally biased toward polar residues; it reads KRQGTASTLTR. The tract at residues 44-85 is disordered; sequence KRQGTASTLTRSEVRGGGRKPYKQKGTGRARQGSIRTPLRPG. The span at 60-71 shows a compositional bias: basic residues; it reads GGRKPYKQKGTG.

It belongs to the universal ribosomal protein uL4 family. In terms of assembly, part of the 50S ribosomal subunit.

In terms of biological role, one of the primary rRNA binding proteins, this protein initially binds near the 5'-end of the 23S rRNA. It is important during the early stages of 50S assembly. It makes multiple contacts with different domains of the 23S rRNA in the assembled 50S subunit and ribosome. Its function is as follows. Forms part of the polypeptide exit tunnel. The chain is Large ribosomal subunit protein uL4 from Prochlorococcus marinus (strain MIT 9301).